Consider the following 745-residue polypeptide: Junction plakoglobin (745 aa).

M1 carries the post-translational modification N-acetylmethionine. T14 carries an O-linked (GlcNAc) threonine glycan. Residues S99 and S125 each carry the phosphoserine modification. 12 ARM repeats span residues 132–171, 172–215, 216–255, 258–297, 298–341, 342–381, 383–420, 423–464, 470–510, 512–551, 574–613, and 615–661; these read NYQD…QLSK, KEAS…LSHH, REGL…NLLL, EGAK…LLAY, GNQE…LSVC, PSNK…NLSD, ATKQ…NLTC, SKNK…HLTS, EMAQ…NLAL, PANH…QPYT, PMNR…ELAQ, and KEAA…PDYR. The segment at 132–297 is interaction with DSC1 and DSG1; the sequence is NYQDDAELAT…TTDCLQLLAY (166 aa). Residue S182 is modified to Phosphoserine. Residues 574–661 are interaction with DSC1; the sequence is PMNRMEIFRL…ISEDKNPDYR (88 aa). Phosphoserine occurs at positions 665 and 730.

The protein belongs to the beta-catenin family. In terms of assembly, homodimer. Component of an E-cadherin/catenin adhesion complex composed of at least E-cadherin/CDH1 and gamma-catenin/JUP, and possibly alpha-catenin/CTNNA1; the complex is located to adherens junctions. The stable association of CTNNA1 is controversial as CTNNA1 was shown not to bind to F-actin when assembled in the complex. Interacts with MUC1. Interacts with CAV1. Interacts with PTPRJ. Interacts with DSG1. Interacts with DSC1 and DSC2. Interacts with PKP2. Interacts with PKP3 (via N-terminus); the interaction is required for PKP3 localization to desmosome cell-cell junctions. Interacts with DSG4. Post-translationally, may be phosphorylated by FER.

It localises to the cell junction. The protein resides in the adherens junction. Its subcellular location is the desmosome. It is found in the cytoplasm. The protein localises to the cytoskeleton. It localises to the cell membrane. The protein resides in the nucleus. Common junctional plaque protein. The membrane-associated plaques are architectural elements in an important strategic position to influence the arrangement and function of both the cytoskeleton and the cells within the tissue. The presence of plakoglobin in both the desmosomes and in the intermediate junctions suggests that it plays a central role in the structure and function of submembranous plaques. Acts as a substrate for VE-PTP and is required by it to stimulate VE-cadherin function in endothelial cells. Can replace beta-catenin in E-cadherin/catenin adhesion complexes which are proposed to couple cadherins to the actin cytoskeleton. The sequence is that of Junction plakoglobin from Bos taurus (Bovine).